A 173-amino-acid chain; its full sequence is Ribosome maturation factor RimM (173 aa).

The PRC barrel domain maps to 98 to 171 (DDQYYYDEII…LITIDALEGL (74 aa)).

The protein belongs to the RimM family. In terms of assembly, binds ribosomal protein uS19.

The protein localises to the cytoplasm. Its function is as follows. An accessory protein needed during the final step in the assembly of 30S ribosomal subunit, possibly for assembly of the head region. Essential for efficient processing of 16S rRNA. May be needed both before and after RbfA during the maturation of 16S rRNA. It has affinity for free ribosomal 30S subunits but not for 70S ribosomes. The sequence is that of Ribosome maturation factor RimM from Leuconostoc mesenteroides subsp. mesenteroides (strain ATCC 8293 / DSM 20343 / BCRC 11652 / CCM 1803 / JCM 6124 / NCDO 523 / NBRC 100496 / NCIMB 8023 / NCTC 12954 / NRRL B-1118 / 37Y).